The primary structure comprises 346 residues: Holliday junction branch migration complex subunit RuvB (346 aa).

The tract at residues 1 to 182 is large ATPase domain (RuvB-L); it reads MSERLVTSNE…FGVLCSMEYY (182 aa). Residues L21, R22, G63, K66, T67, T68, 129 to 131, R172, Y182, and R219 contribute to the ATP site; that span reads EDY. T67 contributes to the Mg(2+) binding site. Positions 183 to 253 are small ATPAse domain (RuvB-S); the sequence is TDEQLKEIII…AAKKSLEILE (71 aa). The interval 256–346 is head domain (RuvB-H); sequence GEGFDRIDNK…DSKQCTLFEK (91 aa). R311 and R316 together coordinate DNA.

Belongs to the RuvB family. As to quaternary structure, homohexamer. Forms an RuvA(8)-RuvB(12)-Holliday junction (HJ) complex. HJ DNA is sandwiched between 2 RuvA tetramers; dsDNA enters through RuvA and exits via RuvB. An RuvB hexamer assembles on each DNA strand where it exits the tetramer. Each RuvB hexamer is contacted by two RuvA subunits (via domain III) on 2 adjacent RuvB subunits; this complex drives branch migration. In the full resolvosome a probable DNA-RuvA(4)-RuvB(12)-RuvC(2) complex forms which resolves the HJ.

It is found in the cytoplasm. It carries out the reaction ATP + H2O = ADP + phosphate + H(+). Its function is as follows. The RuvA-RuvB-RuvC complex processes Holliday junction (HJ) DNA during genetic recombination and DNA repair, while the RuvA-RuvB complex plays an important role in the rescue of blocked DNA replication forks via replication fork reversal (RFR). RuvA specifically binds to HJ cruciform DNA, conferring on it an open structure. The RuvB hexamer acts as an ATP-dependent pump, pulling dsDNA into and through the RuvAB complex. RuvB forms 2 homohexamers on either side of HJ DNA bound by 1 or 2 RuvA tetramers; 4 subunits per hexamer contact DNA at a time. Coordinated motions by a converter formed by DNA-disengaged RuvB subunits stimulates ATP hydrolysis and nucleotide exchange. Immobilization of the converter enables RuvB to convert the ATP-contained energy into a lever motion, pulling 2 nucleotides of DNA out of the RuvA tetramer per ATP hydrolyzed, thus driving DNA branch migration. The RuvB motors rotate together with the DNA substrate, which together with the progressing nucleotide cycle form the mechanistic basis for DNA recombination by continuous HJ branch migration. Branch migration allows RuvC to scan DNA until it finds its consensus sequence, where it cleaves and resolves cruciform DNA. The polypeptide is Holliday junction branch migration complex subunit RuvB (Clostridium perfringens (strain ATCC 13124 / DSM 756 / JCM 1290 / NCIMB 6125 / NCTC 8237 / Type A)).